A 61-amino-acid chain; its full sequence is Large ribosomal subunit protein uL30 (61 aa).

Belongs to the universal ribosomal protein uL30 family. As to quaternary structure, part of the 50S ribosomal subunit.

This is Large ribosomal subunit protein uL30 from Exiguobacterium sp. (strain ATCC BAA-1283 / AT1b).